The chain runs to 417 residues: Tryptophan synthase beta chain (417 aa).

K111 is subject to N6-(pyridoxal phosphate)lysine.

It belongs to the TrpB family. Tetramer of two alpha and two beta chains. Pyridoxal 5'-phosphate serves as cofactor.

It catalyses the reaction (1S,2R)-1-C-(indol-3-yl)glycerol 3-phosphate + L-serine = D-glyceraldehyde 3-phosphate + L-tryptophan + H2O. It functions in the pathway amino-acid biosynthesis; L-tryptophan biosynthesis; L-tryptophan from chorismate: step 5/5. The beta subunit is responsible for the synthesis of L-tryptophan from indole and L-serine. The protein is Tryptophan synthase beta chain of Fervidobacterium nodosum (strain ATCC 35602 / DSM 5306 / Rt17-B1).